The sequence spans 717 residues: Envelope glycoprotein H (717 aa).

The N-terminal stretch at 1-18 (MTILQLFLVFLNILEALC) is a signal peptide. The Virion surface segment spans residues 19 to 693 (DYQLPKPRIN…AYRARLVNFI (675 aa)). N-linked (GlcNAc...) asparagine; by host glycosylation is found at Asn43, Asn59, Asn80, and Asn128. Positions 177–239 (TPAYPTISCH…SNDVFSLVIF (63 aa)) are interaction with gL. 4 N-linked (GlcNAc...) asparagine; by host glycosylation sites follow: Asn444, Asn560, Asn613, and Asn675. The chain crosses the membrane as a helical span at residues 694-714 (IVIMVFILFLVGLYLLYKLFV). At 715 to 717 (YLT) the chain is on the intravirion side.

This sequence belongs to the herpesviridae glycoprotein H family. Interacts with glycoprotein L (gL); this interaction is necessary for the correct processing and cell surface expression of gH. The heterodimer gH/gL seems to interact with gB trimers during fusion. In terms of processing, N-glycosylated, O-glycosylated, and sialylated.

It is found in the virion membrane. The protein localises to the host cell membrane. Its subcellular location is the host endosome membrane. Its function is as follows. The heterodimer glycoprotein H-glycoprotein L is required for the fusion of viral and plasma membranes leading to virus entry into the host cell. Following initial binding to host receptor, membrane fusion is mediated by the fusion machinery composed of gB and the heterodimer gH/gL. May also be involved in the fusion between the virion envelope and the outer nuclear membrane during virion morphogenesis. The sequence is that of Envelope glycoprotein H from Saimiriine herpesvirus 2 (strain 11) (SaHV-2).